The sequence spans 536 residues: Portal protein (536 aa).

It belongs to the podoviridae portal protein family. Homododecamer. Interacts with major capsid protein. Interacts with the tail tube protein gp11. Interacts with the terminase large subunit. Interacts with the internal virion protein gp14.

Its subcellular location is the virion. Its function is as follows. Forms the portal vertex of the capsid. This portal plays critical roles in head assembly, genome packaging, neck/tail attachment, and genome ejection. The portal protein multimerizes as a single ring-shaped homododecamer arranged around a central channel. This chain is Portal protein, found in Escherichia phage T7 (Bacteriophage T7).